A 133-amino-acid chain; its full sequence is Beta-synuclein (133 aa).

2 tandem repeats follow at residues 20 to 30 (EKTKQGVTEAA) and 31 to 41 (EKTKEGVLYVG). A 4 X 11 AA tandem repeats of [EGS]-K-T-K-[EQ]-[GQ]-V-X(4) region spans residues 20 to 66 (EKTKQGVTEAAEKTKEGVLYVGSKTSGVVQGVASVAEKTKEQASHLG). Residues 42–55 (SKTSGVVQGVASVA) form a 3; approximate repeat. Ser-45 carries the post-translational modification Phosphoserine. Copy 4 of the repeat occupies 56-66 (EKTKEQASHLG). The segment at 96 to 133 (EVAQEAAEEPLIEPLMEPEGESYEDSPQEEYQEYEPEA) is disordered. The span at 97-133 (VAQEAAEEPLIEPLMEPEGESYEDSPQEEYQEYEPEA) shows a compositional bias: acidic residues. Residue Ser-117 is modified to Phosphoserine; by BARK1, CK2 and GRK5.

It belongs to the synuclein family. Phosphorylated. Phosphorylation by G-protein coupled receptor kinases (GRK) is more efficient than phosphorylation by CK1, CK2 and CaM-kinase II. Highly expressed in the brain.

The protein localises to the cytoplasm. Functionally, may be involved in neuronal plasticity. In Mus musculus (Mouse), this protein is Beta-synuclein (Sncb).